The chain runs to 305 residues: Ribosomal RNA small subunit methyltransferase H (305 aa).

S-adenosyl-L-methionine is bound by residues 30 to 32 (GGH), Asp-49, Phe-74, Asp-96, and Gln-103.

The protein belongs to the methyltransferase superfamily. RsmH family.

It is found in the cytoplasm. The catalysed reaction is cytidine(1402) in 16S rRNA + S-adenosyl-L-methionine = N(4)-methylcytidine(1402) in 16S rRNA + S-adenosyl-L-homocysteine + H(+). In terms of biological role, specifically methylates the N4 position of cytidine in position 1402 (C1402) of 16S rRNA. This chain is Ribosomal RNA small subunit methyltransferase H, found in Francisella tularensis subsp. tularensis (strain FSC 198).